The following is a 426-amino-acid chain: D-tagatose-1,6-bisphosphate aldolase subunit KbaZ (426 aa).

This sequence belongs to the GatZ/KbaZ family. KbaZ subfamily. As to quaternary structure, forms a complex with KbaY.

It functions in the pathway carbohydrate metabolism; D-tagatose 6-phosphate degradation; D-glyceraldehyde 3-phosphate and glycerone phosphate from D-tagatose 6-phosphate: step 2/2. Its function is as follows. Component of the tagatose-1,6-bisphosphate aldolase KbaYZ that is required for full activity and stability of the Y subunit. Could have a chaperone-like function for the proper and stable folding of KbaY. When expressed alone, KbaZ does not show any aldolase activity. The polypeptide is D-tagatose-1,6-bisphosphate aldolase subunit KbaZ (Escherichia coli O157:H7).